Here is a 379-residue protein sequence, read N- to C-terminus: Homoserine O-acetyltransferase (379 aa).

The region spanning 52 to 356 (NVVVVLHALT…VYGHDGFLVE (305 aa)) is the AB hydrolase-1 domain. The active-site Nucleophile is Ser157. Residue Arg227 coordinates substrate. Active-site residues include Asp320 and His350. Position 351 (Asp351) interacts with substrate.

Belongs to the AB hydrolase superfamily. MetX family. In terms of assembly, homodimer.

It is found in the cytoplasm. It carries out the reaction L-homoserine + acetyl-CoA = O-acetyl-L-homoserine + CoA. The protein operates within amino-acid biosynthesis; L-methionine biosynthesis via de novo pathway; O-acetyl-L-homoserine from L-homoserine: step 1/1. In terms of biological role, transfers an acetyl group from acetyl-CoA to L-homoserine, forming acetyl-L-homoserine. This Mycobacterium bovis (strain ATCC BAA-935 / AF2122/97) protein is Homoserine O-acetyltransferase.